A 710-amino-acid chain; its full sequence is Lactoperoxidase (710 aa).

A signal peptide spans 1 to 23 (MKVLLHLPALLASLTLLQTAASA). Residues 24 to 80 (SDDPTAETDIIHDTVEEVKVWVNKAFLDSRDRLKMAMTTKIHSTRHLSDYLKHAKGR) constitute a propeptide that is removed on maturation. Cysteine 130 and cysteine 143 are disulfide-bonded. Aspartate 223 serves as a coordination point for heme b. Histidine 224 serves as the catalytic Proton acceptor. Residue aspartate 225 coordinates Ca(2+). Intrachain disulfides connect cysteine 244–cysteine 254 and cysteine 248–cysteine 272. Residues threonine 299, phenylalanine 301, aspartate 303, and serine 305 each coordinate Ca(2+). Phosphoserine is present on serine 313. Cysteines 352 and 363 form a disulfide. 2 residues coordinate heme b: glutamate 373 and histidine 466. Position 480 is a 3'-nitrotyrosine (tyrosine 480). 2 disulfide bridges follow: cysteine 571–cysteine 628 and cysteine 669–cysteine 694.

The protein belongs to the peroxidase family. It depends on Ca(2+) as a cofactor. Requires heme b as cofactor. As to expression, expressed in the colon, including colonocytes and mucin-containing goblet cells. Not detected in the ileum.

It is found in the secreted. It localises to the cytoplasm. It catalyses the reaction 2 a phenolic donor + H2O2 = 2 a phenolic radical donor + 2 H2O. The enzyme catalyses thiocyanate + H2O2 + H(+) = hypothiocyanous acid + H2O. The catalysed reaction is iodide + H2O2 = hypoiodite + H2O. In terms of biological role, heme-containing oxidoreductase which catalyzes the conversion of thiocyanate (SCN(-)) into antimicrobial agent hypothiocyanous acid (OSCN(-)) in the presence of hydrogen peroxide (H2O2). Also involved in the conversion of iodide (I(-)) into hypoiodite (IO(-)) in the presence of H2O2. Responsible for the inactivation of a wide range of micro-organisms and hence, important component of defense mechanism. May be implicated in airway host defense against infection. May contribute to maintaining an appropriate H2O2 cellular level, therefore protecting cells from H2O2-caused injuries and inflammation. This chain is Lactoperoxidase, found in Mus musculus (Mouse).